Reading from the N-terminus, the 137-residue chain is MSTELIKTRAIYSGTGRRKCSVAQVRLVPGSGNLIINGIPGESYLQFSPNYLRVSYAPLQVLGLLNQYDIHVNARGGGLTGQADAIRLGVARALCSINPENRTTLKSEGYLTRDPRVKERKKYGLKKARKAPQFSKR.

The tract at residues 106–137 (KSEGYLTRDPRVKERKKYGLKKARKAPQFSKR) is disordered. The span at 118-137 (KERKKYGLKKARKAPQFSKR) shows a compositional bias: basic residues.

It belongs to the universal ribosomal protein uS9 family.

The protein resides in the plastid. Its subcellular location is the chloroplast. This is Small ribosomal subunit protein uS9c (rps9) from Pyropia yezoensis (Susabi-nori).